A 621-amino-acid chain; its full sequence is Chaperone protein HscA homolog (621 aa).

The protein belongs to the heat shock protein 70 family.

Its function is as follows. Chaperone involved in the maturation of iron-sulfur cluster-containing proteins. Has a low intrinsic ATPase activity which is markedly stimulated by HscB. The polypeptide is Chaperone protein HscA homolog (Pseudomonas fluorescens (strain Pf0-1)).